The sequence spans 499 residues: Citrinin biosynthesis cluster MFS transporter mrr1 (499 aa).

The disordered stretch occupies residues 1–29 (MKEEIDAPVSTDASGTDLENARDQPSGEK). 8 helical membrane passes run 58–78 (SLIT…SSVF), 95–115 (VMTL…LVWG), 124–144 (LKPL…VAVA), 155–175 (FFLG…LADF), 187–207 (LFSA…GFIV), 215–235 (WTAW…FLTL), 291–311 (ILVC…LFFV), and 327–347 (GIAA…CLLV). An N-linked (GlcNAc...) asparagine glycan is attached at asparagine 361. A run of 4 helical transmembrane segments spans residues 370–390 (LPPM…FGWT), 395–415 (ISWA…LMIW), 443–463 (AVGA…GVDW), and 467–487 (LLGF…FYGA).

Belongs to the major facilitator superfamily. CAR1 family.

It is found in the membrane. In terms of biological role, MFS transporter; part of the gene cluster that mediates the biosynthesis the mycotoxin citrinin, a hepato-nephrotoxic compound to humans due to inhibition of respiration complex III. This Monascus ruber (Mold) protein is Citrinin biosynthesis cluster MFS transporter mrr1.